The sequence spans 257 residues: Dihydroorotate dehydrogenase B (NAD(+)), electron transfer subunit (257 aa).

The region spanning Met-2 to Leu-102 is the FAD-binding FR-type domain. FAD-binding positions include Arg-53–Ser-56, Ile-70–Arg-72, and Gly-77–Thr-78. 4 residues coordinate [2Fe-2S] cluster: Cys-221, Cys-226, Cys-229, and Cys-244.

Belongs to the PyrK family. In terms of assembly, heterotetramer of 2 PyrK and 2 PyrD type B subunits. The cofactor is [2Fe-2S] cluster. FAD serves as cofactor.

It participates in pyrimidine metabolism; UMP biosynthesis via de novo pathway; orotate from (S)-dihydroorotate (NAD(+) route): step 1/1. In terms of biological role, responsible for channeling the electrons from the oxidation of dihydroorotate from the FMN redox center in the PyrD type B subunit to the ultimate electron acceptor NAD(+). The protein is Dihydroorotate dehydrogenase B (NAD(+)), electron transfer subunit of Geobacillus sp. (strain WCH70).